Consider the following 273-residue polypeptide: Dermonecrotic toxin LarSicTox-alphaIB1aii (273 aa).

Histidine 5 is a catalytic residue. Mg(2+)-binding residues include glutamate 25 and aspartate 27. Histidine 41 functions as the Nucleophile in the catalytic mechanism. Cystine bridges form between cysteine 45–cysteine 51 and cysteine 47–cysteine 190. Position 85 (aspartate 85) interacts with Mg(2+). Asparagine 250 is a glycosylation site (N-linked (GlcNAc...) asparagine).

Belongs to the arthropod phospholipase D family. Class II subfamily. Mg(2+) serves as cofactor. In terms of tissue distribution, expressed by the venom gland.

The protein resides in the secreted. It catalyses the reaction an N-(acyl)-sphingosylphosphocholine = an N-(acyl)-sphingosyl-1,3-cyclic phosphate + choline. The catalysed reaction is an N-(acyl)-sphingosylphosphoethanolamine = an N-(acyl)-sphingosyl-1,3-cyclic phosphate + ethanolamine. It carries out the reaction a 1-acyl-sn-glycero-3-phosphocholine = a 1-acyl-sn-glycero-2,3-cyclic phosphate + choline. The enzyme catalyses a 1-acyl-sn-glycero-3-phosphoethanolamine = a 1-acyl-sn-glycero-2,3-cyclic phosphate + ethanolamine. In terms of biological role, dermonecrotic toxins cleave the phosphodiester linkage between the phosphate and headgroup of certain phospholipids (sphingolipid and lysolipid substrates), forming an alcohol (often choline) and a cyclic phosphate. This toxin acts on sphingomyelin (SM). It may also act on ceramide phosphoethanolamine (CPE), lysophosphatidylcholine (LPC) and lysophosphatidylethanolamine (LPE), but not on lysophosphatidylserine (LPS), and lysophosphatidylglycerol (LPG). It acts by transphosphatidylation, releasing exclusively cyclic phosphate products as second products. Induces dermonecrosis, hemolysis, increased vascular permeability, edema, inflammatory response, and platelet aggregation. The sequence is that of Dermonecrotic toxin LarSicTox-alphaIB1aii from Loxosceles arizonica (Arizona brown spider).